Here is a 300-residue protein sequence, read N- to C-terminus: Acetyl-coenzyme A carboxylase carboxyl transferase subunit beta (300 aa).

Residues 24–293 (LWTNCESCSQ…NAPGAALGGA (270 aa)) enclose the CoA carboxyltransferase N-terminal domain. Positions 28, 31, 47, and 50 each coordinate Zn(2+). The C4-type zinc finger occupies 28–50 (CESCSQMILVKDLQKAMNVCPHC).

This sequence belongs to the AccD/PCCB family. Acetyl-CoA carboxylase is a heterohexamer composed of biotin carboxyl carrier protein (AccB), biotin carboxylase (AccC) and two subunits each of ACCase subunit alpha (AccA) and ACCase subunit beta (AccD). Requires Zn(2+) as cofactor.

It is found in the cytoplasm. The enzyme catalyses N(6)-carboxybiotinyl-L-lysyl-[protein] + acetyl-CoA = N(6)-biotinyl-L-lysyl-[protein] + malonyl-CoA. It participates in lipid metabolism; malonyl-CoA biosynthesis; malonyl-CoA from acetyl-CoA: step 1/1. Component of the acetyl coenzyme A carboxylase (ACC) complex. Biotin carboxylase (BC) catalyzes the carboxylation of biotin on its carrier protein (BCCP) and then the CO(2) group is transferred by the transcarboxylase to acetyl-CoA to form malonyl-CoA. In Gluconacetobacter diazotrophicus (strain ATCC 49037 / DSM 5601 / CCUG 37298 / CIP 103539 / LMG 7603 / PAl5), this protein is Acetyl-coenzyme A carboxylase carboxyl transferase subunit beta.